The chain runs to 298 residues: N-acetylmuramic acid 6-phosphate etherase (298 aa).

The SIS domain maps to 55–218 (IHAQVSGGGR…STGLMIKSGK (164 aa)). The Proton donor role is filled by E83. E114 is an active-site residue.

This sequence belongs to the GCKR-like family. MurNAc-6-P etherase subfamily. As to quaternary structure, homodimer.

The enzyme catalyses N-acetyl-D-muramate 6-phosphate + H2O = N-acetyl-D-glucosamine 6-phosphate + (R)-lactate. It participates in amino-sugar metabolism; 1,6-anhydro-N-acetylmuramate degradation. It functions in the pathway amino-sugar metabolism; N-acetylmuramate degradation. Its pathway is cell wall biogenesis; peptidoglycan recycling. Its function is as follows. Specifically catalyzes the cleavage of the D-lactyl ether substituent of MurNAc 6-phosphate, producing GlcNAc 6-phosphate and D-lactate. Together with AnmK, is also required for the utilization of anhydro-N-acetylmuramic acid (anhMurNAc) either imported from the medium or derived from its own cell wall murein, and thus plays a role in cell wall recycling. The protein is N-acetylmuramic acid 6-phosphate etherase of Escherichia coli (strain SMS-3-5 / SECEC).